The primary structure comprises 379 residues: Galactose-1-phosphate uridylyltransferase (379 aa).

Polar residues predominate over residues 1-15 (MSQSGADPEQRQQAS). Residues 1 to 20 (MSQSGADPEQRQQASEADAM) are disordered. C75 provides a ligand contact to Zn(2+). UDP-alpha-D-glucose is bound by residues A81, 97–98 (ND), and N173. Residue H184 coordinates Zn(2+). H186 acts as the Tele-UMP-histidine intermediate in catalysis. Residue Q188 participates in UDP-alpha-D-glucose binding. Residues E202, H301, H319, and H321 each contribute to the Zn(2+) site. UDP-alpha-D-glucose is bound by residues 334-337 (KFMV) and 339-340 (YE).

This sequence belongs to the galactose-1-phosphate uridylyltransferase type 1 family. In terms of assembly, homodimer. Zn(2+) is required as a cofactor.

The catalysed reaction is alpha-D-galactose 1-phosphate + UDP-alpha-D-glucose = alpha-D-glucose 1-phosphate + UDP-alpha-D-galactose. The protein operates within carbohydrate metabolism; galactose metabolism. Its function is as follows. Plays an important role in galactose metabolism. The protein is Galactose-1-phosphate uridylyltransferase (Galt) of Rattus norvegicus (Rat).